We begin with the raw amino-acid sequence, 101 residues long: Small ribosomal subunit protein uS14 (101 aa).

It belongs to the universal ribosomal protein uS14 family. Part of the 30S ribosomal subunit. Contacts proteins S3 and S10.

In terms of biological role, binds 16S rRNA, required for the assembly of 30S particles and may also be responsible for determining the conformation of the 16S rRNA at the A site. The chain is Small ribosomal subunit protein uS14 from Gluconacetobacter diazotrophicus (strain ATCC 49037 / DSM 5601 / CCUG 37298 / CIP 103539 / LMG 7603 / PAl5).